Reading from the N-terminus, the 552-residue chain is Solute carrier family 22 member 6-B (552 aa).

The Cytoplasmic portion of the chain corresponds to 1–16 (MAFQEILESLGGMGRY). Residues 17 to 37 (QVIHVVLLSLPVFMLASHNLM) traverse the membrane as a helical segment. The Extracellular portion of the chain corresponds to 38–137 (QNFTAATPSH…LVCNHRRMRQ (100 aa)). Residues 138 to 158 (VAQSIYMAGVLVGSILFGGLS) form a helical membrane-spanning segment. The Cytoplasmic segment spans residues 159–164 (DKFGRR). Residues 165-184 (PLNIWSNLQMFVTGICAAFS) form a helical membrane-spanning segment. Residue proline 185 is a topological domain, extracellular. A helical transmembrane segment spans residues 186–206 (NYIWYCIFRFLTGVAFSGIVL). Residues 207–225 (NSYSLTVEWIPTGNRAFTS) are Cytoplasmic-facing. Residues 226–246 (TATGYCYTMGQLVLVGLAFII) form a helical membrane-spanning segment. Topologically, residues 247-250 (RDWQ) are extracellular. The helical transmembrane segment at 251-271 (WLQLAASIPFFFYFLYSWWIP) threads the bilayer. The Cytoplasmic segment spans residues 272-336 (ESGRWLVLSG…YSALDLVRTP (65 aa)). Residues 337 to 356 (VVRRISFCISCTWFSTSFAY) traverse the membrane as a helical segment. A topological domain (extracellular) is located at residue tyrosine 357. The chain crosses the membrane as a helical span at residues 358-378 (GLALDLQSFGVSIYIIQIIFG). The Cytoplasmic portion of the chain corresponds to 379 to 398 (TVDIPAKFISYFITTYVGRR). Residues 399-419 (VSQAITLILAGIAILVNISVP) form a helical membrane-spanning segment. Over 420–426 (QDFQTVR) the chain is Extracellular. A helical membrane pass occupies residues 427–447 (TAMAVFGKGCLAASFNCLYLY). The Cytoplasmic segment spans residues 448-459 (TGELYPTVIRQT). The helical transmembrane segment at 460-480 (GMGLGAMMARLGGIIAPLAQM) threads the bilayer. At 481-487 (TGDIYHS) the chain is on the extracellular side. A helical membrane pass occupies residues 488 to 508 (LPLIIFGCLPILSGIAGCFLP). Over 509 to 552 (ETLGVPLPETIEEVESPDKQQKDVNVSAKIPLKETELYNMKTDV) the chain is Cytoplasmic.

Belongs to the major facilitator (TC 2.A.1) superfamily. Organic cation transporter (TC 2.A.1.19) family. In terms of processing, glycosylated. Glycosylation is necessary for proper targeting of the transporter to the plasma membrane.

It is found in the cell membrane. The protein resides in the basolateral cell membrane. Its subcellular location is the basal cell membrane. Its function is as follows. Involved in the renal elimination of endogenous and exogenous organic anions. Mediates the sodium-independent uptake of p-aminohippurate (PAH), cidofovir, adefovir, 9-(2-phosphonylmethoxyethyl) guanine (PMEG), 9-(2-phosphonylmethoxyethyl) diaminopurine (PMEDAP) and edaravone sulfate. PAH uptake is inhibited by furosemide, steviol, phorbol 12-myristate 13-acetate (PMA), calcium ionophore A23187, benzylpenicillin, furosemide, indomethacin, bumetamide, losartan, probenecid, phenol red, urate, and alpha-ketoglutarate. This is Solute carrier family 22 member 6-B (slc22a6-b) from Xenopus laevis (African clawed frog).